Here is a 77-residue protein sequence, read N- to C-terminus: Acyl carrier protein (77 aa).

The Carrier domain maps to 2 to 77 (SDVAEKVKKI…DAIAYIEEKK (76 aa)). O-(pantetheine 4'-phosphoryl)serine is present on Ser37.

Belongs to the acyl carrier protein (ACP) family. In terms of processing, 4'-phosphopantetheine is transferred from CoA to a specific serine of apo-ACP by AcpS. This modification is essential for activity because fatty acids are bound in thioester linkage to the sulfhydryl of the prosthetic group.

Its subcellular location is the cytoplasm. It participates in lipid metabolism; fatty acid biosynthesis. Its function is as follows. Carrier of the growing fatty acid chain in fatty acid biosynthesis. The sequence is that of Acyl carrier protein from Desulfovibrio desulfuricans (strain ATCC 27774 / DSM 6949 / MB).